We begin with the raw amino-acid sequence, 200 residues long: Small ribosomal subunit protein uS4 (200 aa).

The tract at residues 22–43 (TGKELERRPYAPGQHGPTQRKK) is disordered. The S4 RNA-binding domain maps to 92 to 170 (QRLDNIVYRL…VPEYVTFDAE (79 aa)).

This sequence belongs to the universal ribosomal protein uS4 family. Part of the 30S ribosomal subunit. Contacts protein S5. The interaction surface between S4 and S5 is involved in control of translational fidelity.

Its function is as follows. One of the primary rRNA binding proteins, it binds directly to 16S rRNA where it nucleates assembly of the body of the 30S subunit. In terms of biological role, with S5 and S12 plays an important role in translational accuracy. This chain is Small ribosomal subunit protein uS4, found in Listeria innocua serovar 6a (strain ATCC BAA-680 / CLIP 11262).